The chain runs to 433 residues: tRNA modification GTPase MnmE (433 aa).

3 residues coordinate (6S)-5-formyl-5,6,7,8-tetrahydrofolate: Arg24, Glu81, and Arg120. Positions 216 to 359 constitute a TrmE-type G domain; the sequence is GVEIVVLGAP…LLAALRARVE (144 aa). Asn226 provides a ligand contact to K(+). GTP contacts are provided by residues 226 to 231, 245 to 251, 270 to 273, and 340 to 342; these read NAGKST, SDIPGTT, DTAG, and SAR. Ser230 is a binding site for Mg(2+). K(+)-binding residues include Ser245, Ile247, and Thr250. Thr251 serves as a coordination point for Mg(2+). Residue Lys433 coordinates (6S)-5-formyl-5,6,7,8-tetrahydrofolate.

It belongs to the TRAFAC class TrmE-Era-EngA-EngB-Septin-like GTPase superfamily. TrmE GTPase family. Homodimer. Heterotetramer of two MnmE and two MnmG subunits. K(+) serves as cofactor.

The protein localises to the cytoplasm. Functionally, exhibits a very high intrinsic GTPase hydrolysis rate. Involved in the addition of a carboxymethylaminomethyl (cmnm) group at the wobble position (U34) of certain tRNAs, forming tRNA-cmnm(5)s(2)U34. This Acidiphilium cryptum (strain JF-5) protein is tRNA modification GTPase MnmE.